The sequence spans 112 residues: Protein 4.2 (112 aa).

Positions 64–93 (KPDGLNHQVTQGKKSHTQSQQTGPTTLTSD) are disordered. The segment covering 70–92 (HQVTQGKKSHTQSQQTGPTTLTS) has biased composition (polar residues).

The protein is Protein 4.2 of Escherichia phage T7 (Bacteriophage T7).